Here is a 572-residue protein sequence, read N- to C-terminus: Formate--tetrahydrofolate ligase (572 aa).

Residue 65–72 (TPLGEGKT) participates in ATP binding.

This sequence belongs to the formate--tetrahydrofolate ligase family.

It catalyses the reaction (6S)-5,6,7,8-tetrahydrofolate + formate + ATP = (6R)-10-formyltetrahydrofolate + ADP + phosphate. Its pathway is one-carbon metabolism; tetrahydrofolate interconversion. This Chloroflexus aurantiacus (strain ATCC 29366 / DSM 635 / J-10-fl) protein is Formate--tetrahydrofolate ligase.